We begin with the raw amino-acid sequence, 345 residues long: Serine proteinase inhibitor 2 (345 aa).

The protein belongs to the serpin family. Poxviruses subfamily.

It localises to the host cytoplasm. In terms of biological role, viral serpin that inhibits both cysteine and serine proteinases involved in the regulation of host inflammatory and apoptosis processes. Major anti-apoptotic protein which inhibits both intrinsic and extrinsic pathways and strongly cleaves host CASP1 and CASP8 but is a rather poor inhibitor of host CASP3. Prevents the proteolytic activity of host interleukin-1-beta converting enzyme (ICE) and ICE-like enzymes. Can also block apoptosis through host tumor necrosis factor (TNF) receptor. The inhibition of host ICE is an example of a 'cross-class' interaction, in which a serpin inhibits a non-serine proteinase. Also inhibits granzyme B. The protein is Serine proteinase inhibitor 2 (OPG199) of Vaccinia virus (strain Western Reserve) (VACV).